Consider the following 222-residue polypeptide: Kinetochore protein Spc25 (222 aa).

A coiled-coil region spans residues 51–86 (RHQRKVGKLQKVLMERREELDKRVSFIEELDRELEA).

This sequence belongs to the SPC25 family. Component of the Ndc80 complex, which is composed of Ndc80, Nuf2 and Spc25.

It is found in the nucleus. It localises to the chromosome. The protein resides in the centromere. The protein localises to the kinetochore. Its function is as follows. Acts as a component of the essential kinetochore-associated Ndc80 complex, which is required for chromosome segregation and spindle checkpoint activity during meiosis and mitosis. Required for kinetochore integrity and the organization of stable microtubule binding sites in the outer plate of the kinetochore. Participates in SAC signaling that responds specifically to disruptions in spindle microtubule dynamics. The NDC80 complex synergistically enhances the affinity of the SKA1 complex for microtubules and may allow the NDC80 complex to track depolymerizing microtubules. The protein is Kinetochore protein Spc25 of Drosophila melanogaster (Fruit fly).